A 148-amino-acid chain; its full sequence is Ubiquitin-conjugating enzyme E2 8 (148 aa).

A UBC core domain is found at 1-147 (MASKRILKEL…ARNWTQKYAM (147 aa)). The active-site Glycyl thioester intermediate is the cysteine 85.

The protein belongs to the ubiquitin-conjugating enzyme family. As to quaternary structure, interacts with CIP8, CHIP, NLA and XERICO. In terms of tissue distribution, highest expression in young stems, old leaves. Lowest levels in floral buds, anthers and young leaves.

It carries out the reaction S-ubiquitinyl-[E1 ubiquitin-activating enzyme]-L-cysteine + [E2 ubiquitin-conjugating enzyme]-L-cysteine = [E1 ubiquitin-activating enzyme]-L-cysteine + S-ubiquitinyl-[E2 ubiquitin-conjugating enzyme]-L-cysteine.. The protein operates within protein modification; protein ubiquitination. Its function is as follows. Accepts the ubiquitin from the E1 complex and catalyzes its covalent attachment to other proteins. Mediates the selective degradation of short-lived and abnormal proteins. In Arabidopsis thaliana (Mouse-ear cress), this protein is Ubiquitin-conjugating enzyme E2 8 (UBC8).